The sequence spans 138 residues: Putative pre-16S rRNA nuclease (138 aa).

Belongs to the YqgF nuclease family.

It localises to the cytoplasm. Functionally, could be a nuclease involved in processing of the 5'-end of pre-16S rRNA. The sequence is that of Putative pre-16S rRNA nuclease from Clostridium beijerinckii (strain ATCC 51743 / NCIMB 8052) (Clostridium acetobutylicum).